Reading from the N-terminus, the 118-residue chain is Small ribosomal subunit protein uS13 (118 aa).

The tract at residues 99 to 118 is disordered; it reads GQRTRTNARTRKGPRKAIKK.

It belongs to the universal ribosomal protein uS13 family. In terms of assembly, part of the 30S ribosomal subunit. Forms a loose heterodimer with protein S19. Forms two bridges to the 50S subunit in the 70S ribosome.

In terms of biological role, located at the top of the head of the 30S subunit, it contacts several helices of the 16S rRNA. In the 70S ribosome it contacts the 23S rRNA (bridge B1a) and protein L5 of the 50S subunit (bridge B1b), connecting the 2 subunits; these bridges are implicated in subunit movement. Contacts the tRNAs in the A and P-sites. In Xylella fastidiosa (strain M12), this protein is Small ribosomal subunit protein uS13.